Here is a 432-residue protein sequence, read N- to C-terminus: MSDKLPYKVADIGLAAWGRKALDIAENEMPGLMRMREQYSASKPLKGARIAGCLHMTVETAVLIETLVALGAEVQWSSCNIFSTQDHAAAAIAKAGIPVYAWKGETDEEYLWCIEQTLYFKDGPLNMILDDGGDLTNLIHTKYPQLLSGIRGISEETTTGVHNLYKMMANGILKVPAINVNDSVTKSKFDNLYGCRESLIDGIKRATDVMIAGKVAVVAGYGDVGKGCAQALRGFGARVIITEIDPINALQAAMEGYEVTTMDEACQEGNIFVTTTGCVDIILGRHFEQMKDDAIVCNIGHFDVEIDVKWLNENAVEKVNIKPQVDRYRLKNGRRIILLAEGRLVNLGCAMGHPSFVMSNSFTNQVMAQIELWTHPDKYPVGVHFLPKKLDEAVAEAHLGKLNVKLTKLTEKQAQYLGMSRDGPFKPDHYRY.

Residue Ser2 is modified to N-acetylserine. Substrate contacts are provided by Thr57, Asp131, and Glu156. A Phosphoserine modification is found at Ser183. The tract at residues 183–350 (SVTKSKFDNL…EGRLVNLGCA (168 aa)) is NAD binding. The substrate site is built by Lys186 and Asp190. An N6-(2-hydroxyisobutyryl)lysine modification is found at Lys186. The residue at position 193 (Tyr193) is a Phosphotyrosine.

Belongs to the adenosylhomocysteinase family. Homotetramer. Interaction with AHCYL1. It depends on NAD(+) as a cofactor.

Its subcellular location is the cytoplasm. It is found in the melanosome. The protein resides in the nucleus. It localises to the endoplasmic reticulum. The enzyme catalyses S-adenosyl-L-homocysteine + H2O = L-homocysteine + adenosine. Its pathway is amino-acid biosynthesis; L-homocysteine biosynthesis; L-homocysteine from S-adenosyl-L-homocysteine: step 1/1. Its function is as follows. Catalyzes the hydrolysis of S-adenosyl-L-homocysteine to form adenosine and homocysteine. Binds copper ions. The sequence is that of Adenosylhomocysteinase (AHCY) from Macaca fascicularis (Crab-eating macaque).